The chain runs to 557 residues: Potassium-transporting ATPase potassium-binding subunit (557 aa).

12 helical membrane-spanning segments follow: residues 5 to 25, 63 to 83, 132 to 152, 170 to 190, 253 to 273, 283 to 303, 329 to 349, 356 to 376, 379 to 399, 416 to 436, 484 to 504, and 526 to 546; these read GFLLIATFLLVLMVLARPLGS, LCAILGLNMLGLAVLFFMLLG, GLTVQNFLSAASGIAVIFAFI, LLRITLWVLVPVALLIALFFI, FVQMLAIFLIPTALCFAFGEV, LLWAMSVIFVICVGVVMWAEV, VLVSSLFAVVTTAASCGAVIA, ALGGMVPMWLMQIGEVVFGGV, GLYGMMLFVLLAVFIAGLMIG, LTALAILVTPTLVLMGAALAM, LLAFCMFVGRFGVIIPVMAIA, and LFVGLLIGTVLLVGALTFIPA.

Belongs to the KdpA family. As to quaternary structure, the system is composed of three essential subunits: KdpA, KdpB and KdpC.

Its subcellular location is the cell inner membrane. Part of the high-affinity ATP-driven potassium transport (or Kdp) system, which catalyzes the hydrolysis of ATP coupled with the electrogenic transport of potassium into the cytoplasm. This subunit binds the periplasmic potassium ions and delivers the ions to the membrane domain of KdpB through an intramembrane tunnel. This Shigella boydii serotype 4 (strain Sb227) protein is Potassium-transporting ATPase potassium-binding subunit.